Here is a 280-residue protein sequence, read N- to C-terminus: Threonylcarbamoyl-AMP synthase (280 aa).

A mitochondrion-targeting transit peptide spans 1 to 56 (MSTARPCAGLRAAVAAGMGLSDGPAGSSRGCRLLRPPAPAPALPGARLLRLPESEA). A Phosphoserine modification is found at S61. One can recognise a YrdC-like domain in the interval 68–258 (TEALRAAVAE…KFGIIRSGCA (191 aa)).

Belongs to the SUA5 family. In terms of assembly, interacts with RSC1A1.

The protein resides in the cytoplasm. It localises to the mitochondrion. It is found in the cell membrane. It catalyses the reaction L-threonine + hydrogencarbonate + ATP = L-threonylcarbamoyladenylate + diphosphate + H2O. Functionally, cytoplasmic and mitochondrial threonylcarbamoyl-AMP synthase required for the formation of a threonylcarbamoyl group on adenosine at position 37 (t(6)A37) in tRNAs that read codons beginning with adenine. Catalyzes the conversion of L-threonine, HCO(3)(-)/CO(2) and ATP to give threonylcarbamoyl-AMP (TC-AMP) as the acyladenylate intermediate, with the release of diphosphate. Participates in t(6)A37 formation in cytoplasmic and mitochondrial tRNAs. May regulate the activity of some transporters. The protein is Threonylcarbamoyl-AMP synthase of Rattus norvegicus (Rat).